Here is a 432-residue protein sequence, read N- to C-terminus: Glutamate-1-semialdehyde 2,1-aminomutase 1 (432 aa).

An N6-(pyridoxal phosphate)lysine modification is found at Lys-272.

Belongs to the class-III pyridoxal-phosphate-dependent aminotransferase family. HemL subfamily. As to quaternary structure, homodimer. Requires pyridoxal 5'-phosphate as cofactor.

The protein localises to the cytoplasm. The enzyme catalyses (S)-4-amino-5-oxopentanoate = 5-aminolevulinate. It participates in porphyrin-containing compound metabolism; protoporphyrin-IX biosynthesis; 5-aminolevulinate from L-glutamyl-tRNA(Glu): step 2/2. The chain is Glutamate-1-semialdehyde 2,1-aminomutase 1 from Exiguobacterium sibiricum (strain DSM 17290 / CCUG 55495 / CIP 109462 / JCM 13490 / 255-15).